The primary structure comprises 229 residues: Cytochrome c oxidase subunit 2 (229 aa).

Over 1-26 the chain is Mitochondrial intermembrane; it reads MATWMNINLQDANSSTMEQLTMFHDH. The helical transmembrane segment at 27–48 threads the bilayer; sequence TLMILTMITSIVTFIMVSMTTN. Residues 49 to 62 lie on the Mitochondrial matrix side of the membrane; sequence TLINRYLLEGQTIE. Residues 63-82 traverse the membrane as a helical segment; the sequence is FIWTTIPAITLIFIALPSLH. Residues 83 to 229 lie on the Mitochondrial intermembrane side of the membrane; the sequence is LLYLIDEINN…LKWINKSLSS (147 aa). Cu cation-binding residues include H161, C196, E198, C200, H204, and M207. E198 contacts Mg(2+).

Belongs to the cytochrome c oxidase subunit 2 family. Component of the cytochrome c oxidase (complex IV, CIV), a multisubunit enzyme composed of a catalytic core of 3 subunits and several supernumerary subunits. The complex exists as a monomer or a dimer and forms supercomplexes (SCs) in the inner mitochondrial membrane with ubiquinol-cytochrome c oxidoreductase (cytochrome b-c1 complex, complex III, CIII). Requires Cu cation as cofactor.

Its subcellular location is the mitochondrion inner membrane. The enzyme catalyses 4 Fe(II)-[cytochrome c] + O2 + 8 H(+)(in) = 4 Fe(III)-[cytochrome c] + 2 H2O + 4 H(+)(out). In terms of biological role, component of the cytochrome c oxidase, the last enzyme in the mitochondrial electron transport chain which drives oxidative phosphorylation. The respiratory chain contains 3 multisubunit complexes succinate dehydrogenase (complex II, CII), ubiquinol-cytochrome c oxidoreductase (cytochrome b-c1 complex, complex III, CIII) and cytochrome c oxidase (complex IV, CIV), that cooperate to transfer electrons derived from NADH and succinate to molecular oxygen, creating an electrochemical gradient over the inner membrane that drives transmembrane transport and the ATP synthase. Cytochrome c oxidase is the component of the respiratory chain that catalyzes the reduction of oxygen to water. Electrons originating from reduced cytochrome c in the intermembrane space (IMS) are transferred via the dinuclear copper A center (CU(A)) of subunit 2 and heme A of subunit 1 to the active site in subunit 1, a binuclear center (BNC) formed by heme A3 and copper B (CU(B)). The BNC reduces molecular oxygen to 2 water molecules using 4 electrons from cytochrome c in the IMS and 4 protons from the mitochondrial matrix. The polypeptide is Cytochrome c oxidase subunit 2 (COII) (Oncopeltus fasciatus (Large milkweed bug)).